The chain runs to 400 residues: ELAV-like protein 4 (400 aa).

The tract at residues 12 to 48 is disordered; the sequence is TMEPQVSNGPTSNTSNGPSSNSRNCPSPMQTGAATDD. Residues 18–33 show a composition bias toward low complexity; sequence SNGPTSNTSNGPSSNS. Residues 34 to 44 are compositionally biased toward polar residues; sequence RNCPSPMQTGA. 3 RRM domains span residues 51-158, 166-246, and 317-395; these read TNLI…YARP, ANLY…FANN, and WCIF…FKTN.

It belongs to the RRM elav family.

It is found in the cytoplasm. It localises to the perikaryon. The protein resides in the cell projection. The protein localises to the axon. Its subcellular location is the dendrite. It is found in the growth cone. Functionally, RNA-binding protein that is involved in the post-transcriptional regulation of mRNAs. Plays a role in the regulation of mRNA stability, alternative splicing and translation. Binds to AU-rich element (ARE) sequences in the 3' untranslated region (3'UTR) of target mRNAs. Mainly plays a role in neuron-specific RNA processing. This chain is ELAV-like protein 4 (elavl4), found in Xenopus tropicalis (Western clawed frog).